A 139-amino-acid polypeptide reads, in one-letter code: uncharacterized protein (139 aa).

A Globin domain is found at 1–133; that stretch reads MLSEETIRVI…LAKTLITLEK (133 aa).

This sequence belongs to the globin family.

This is an uncharacterized protein from Aquifex aeolicus (strain VF5).